The sequence spans 202 residues: Peptide deformylase (202 aa).

Residues C121 and H163 each coordinate Fe cation. E164 is an active-site residue. Fe cation is bound at residue H167.

Belongs to the polypeptide deformylase family. Fe(2+) serves as cofactor.

The catalysed reaction is N-terminal N-formyl-L-methionyl-[peptide] + H2O = N-terminal L-methionyl-[peptide] + formate. Removes the formyl group from the N-terminal Met of newly synthesized proteins. Requires at least a dipeptide for an efficient rate of reaction. N-terminal L-methionine is a prerequisite for activity but the enzyme has broad specificity at other positions. The protein is Peptide deformylase of Synechococcus sp. (strain CC9311).